Reading from the N-terminus, the 466-residue chain is A-type ATP synthase subunit B (466 aa).

It belongs to the ATPase alpha/beta chains family. Has multiple subunits with at least A(3), B(3), C, D, E, F, H, I and proteolipid K(x).

The protein resides in the cell membrane. Its function is as follows. Component of the A-type ATP synthase that produces ATP from ADP in the presence of a proton gradient across the membrane. The B chain is a regulatory subunit. The chain is A-type ATP synthase subunit B from Metallosphaera sedula (strain ATCC 51363 / DSM 5348 / JCM 9185 / NBRC 15509 / TH2).